Here is a 263-residue protein sequence, read N- to C-terminus: Undecaprenyl-diphosphatase 3 (263 aa).

A run of 8 helical transmembrane segments spans residues 15-37, 42-62, 83-103, 106-126, 142-162, 183-203, 216-236, and 242-262; these read GLTEFLPVSSTGHMILTGHLIGF, AKVFEVVIQLGSILAVVVIFW, LHIIIGMIPAGVLGVLFHSAI, VLFGPGPVVISLVAGGILMIV, ITYKQAFTIGMFQCLALWPGF, AEYTFILAVPMMVAASGLDLI, LFATGFITAFVVAMLAIVSFL, and VKLTPFAYYRFILAAVFYFFI.

It belongs to the UppP family.

The protein resides in the cell membrane. It carries out the reaction di-trans,octa-cis-undecaprenyl diphosphate + H2O = di-trans,octa-cis-undecaprenyl phosphate + phosphate + H(+). Catalyzes the dephosphorylation of undecaprenyl diphosphate (UPP). Confers resistance to bacitracin. The protein is Undecaprenyl-diphosphatase 3 of Bacillus thuringiensis subsp. konkukian (strain 97-27).